Consider the following 466-residue polypeptide: Acetylcholine-gated chloride channel subunit acc-1 (466 aa).

The signal sequence occupies residues 1–24 (MSHPGWIMVSFLTELLSQSSKGIA). Residues 25 to 242 (QSLDNCANDT…FVFERRYGWY (218 aa)) are Extracellular-facing. N32, N102, and N143 each carry an N-linked (GlcNAc...) asparagine glycan. A disulfide bridge connects residues C158 and C172. N211 is a glycosylation site (N-linked (GlcNAc...) asparagine). A helical transmembrane segment spans residues 243 to 263 (VLQGYIPTMVTIVISWISFYL). At 264–272 (GPRAIPART) the chain is on the cytoplasmic side. The helical transmembrane segment at 273-290 (MLGVNSLLAMTFQFGNII) threads the bilayer. Residues 291-304 (RNLPRVSYVKAIDV) lie on the Extracellular side of the membrane. The helical transmembrane segment at 305 to 325 (WMLSGMLFIFLSLLELAVVGF) threads the bilayer. At 326–427 (MSRNEGLPPK…MRELRPETVD (102 aa)) the chain is on the cytoplasmic side. Positions 333-352 (PPKVKKRKRQEDDDEGFSWK) are disordered. Residues 428-448 (FYSAIFFPTAYMLFNISYWSF) traverse the membrane as a helical segment. Residues 449 to 466 (YLTSLSEYFDEDVNIDQP) are Extracellular-facing.

It belongs to the ligand-gated ion channel (TC 1.A.9) family. In terms of assembly, homopentamer (in vitro). Forms heteropentamers composed of acc-1 and acc-4 or acc-1 and acc-3. Both homopentamers and heteropentamers form functional ion channels. In terms of tissue distribution, expressed in a subset of cholinergic motor neurons including cholinergic motor neurons in the ventral cord, the retrovesicular ganglion and in head neurons such as the SMD, RMD motor neurons, the AVA and AVE command interneurons and the SAA neurons. Also expressed in a small number of glutamatergic neurons including the pharyngeal neurons MI and M3, the PLM neurons and a pair of neurons in the lateral ganglion.

It is found in the cell membrane. Functionally, acetylcholine-gated chloride channel subunit. Forms functional homopentameric (in vitro) and functional heteropentameric ion channels with acc-3 and acc-4 ion channel subunits. Currents in channels are triggered in response to acetylcholine, but not in response to GABA, glutamate, glycine, histamine or dopamine. This is Acetylcholine-gated chloride channel subunit acc-1 from Caenorhabditis elegans.